An 86-amino-acid polypeptide reads, in one-letter code: Small ribosomal subunit protein bS20 (86 aa).

Residues 1–18 (MANIKSQEKRIRTNERAR) show a composition bias toward basic and acidic residues. Residues 1–25 (MANIKSQEKRIRTNERARLRNQATK) form a disordered region.

Belongs to the bacterial ribosomal protein bS20 family.

Binds directly to 16S ribosomal RNA. This Mycobacteroides abscessus (strain ATCC 19977 / DSM 44196 / CCUG 20993 / CIP 104536 / JCM 13569 / NCTC 13031 / TMC 1543 / L948) (Mycobacterium abscessus) protein is Small ribosomal subunit protein bS20.